The chain runs to 600 residues: KIF-binding protein (600 aa).

The stretch at 384 to 434 (KAENEATEYSKIMQDYAEAYEHIAFFEENPENQAKMQKRRAKYLEDLLDLL) forms a coiled coil.

This sequence belongs to the KIF-binding protein family.

The protein localises to the cytoplasm. The protein resides in the cytoskeleton. In Drosophila melanogaster (Fruit fly), this protein is KIF-binding protein.